Reading from the N-terminus, the 197-residue chain is RNA-binding protein Rsf1 (197 aa).

Residues Thr7–Gly80 form the RRM domain. A disordered region spans residues Arg74–Phe197. The span at Gly89–Arg102 shows a compositional bias: basic and acidic residues. Residue Thr106 is modified to Phosphothreonine. Low complexity-rich tracts occupy residues Gln117–Gly144 and Arg166–Gly176. Phosphoserine is present on residues Ser168, Ser171, Ser174, Ser188, and Ser190.

This sequence belongs to the splicing factor SR family. In terms of processing, extensively phosphorylated on serine residues in the RS domain.

The protein localises to the nucleus. Functionally, may control important aspects of development. This is RNA-binding protein Rsf1 (Rsf1) from Drosophila melanogaster (Fruit fly).